The following is a 340-amino-acid chain: MGSINPPQILDIRRSKFEESIPKQVEAGLLSSPKTLPALLFYSTEGIQHWNRYSHASDFYPRHEEIQILKDKATDMAASIADGSVVVDLGSASLDKVIHLLEALEAAQKKVTYYALDLSFSELTSTLQAIPTDQFVHVQFSALHGTFDDGLQWLKETLVIRDQPHCLLLFGLTIGNFSRPNAAKFLHNIASHALVESPSQSSILLTLDSCKVPTKVIRAYTAEGVVPFALESLKYGNTLFQQDAGENVFDPEDWYFLSEWNYVLGRHEASLVPRSKDIKLGRPLDKIVVGKHEKVRFGCSYKYDSEERKELFGTAGLRDVKSWSKEGCDVAFYQLKCCPN.

It belongs to the methyltransferase superfamily. As to quaternary structure, homodimer.

The enzyme catalyses 4-(3-methylbut-2-enyl)-L-tryptophan + S-adenosyl-L-methionine = 4-(3-methylbut-2-enyl)-L-abrine + S-adenosyl-L-homocysteine + H(+). It functions in the pathway alkaloid biosynthesis; ergot alkaloid biosynthesis. Its function is as follows. 4-dimethylallyltryptophan N-methyltransferase; part of the gene cluster that mediates the biosynthesis of fungal ergot alkaloid. DmaW catalyzes the first step of ergot alkaloid biosynthesis by condensing dimethylallyl diphosphate (DMAP) and tryptophan to form 4-dimethylallyl-L-tryptophan. The second step is catalyzed by the methyltransferase easF that methylates 4-dimethylallyl-L-tryptophan in the presence of S-adenosyl-L-methionine, resulting in the formation of 4-dimethylallyl-L-abrine. The catalase easC and the FAD-dependent oxidoreductase easE then transform 4-dimethylallyl-L-abrine to chanoclavine-I which is further oxidized by easD in the presence of NAD(+), resulting in the formation of chanoclavine-I aldehyde. Chanoclavine-I aldehyde is the precursor of ergoamides and ergopeptines in Clavicipitaceae, and clavine-type alcaloids such as fumiclavine in Trichocomaceae. However, the metabolites downstream of chanoclavine-I aldehyde in Arthrodermataceae have not been identified yet. This chain is 4-dimethylallyltryptophan N-methyltransferase easF, found in Trichophyton verrucosum (strain HKI 0517).